The primary structure comprises 71 residues: Small ribosomal subunit protein bS18 (71 aa).

The protein belongs to the bacterial ribosomal protein bS18 family. Part of the 30S ribosomal subunit. Forms a tight heterodimer with protein bS6.

In terms of biological role, binds as a heterodimer with protein bS6 to the central domain of the 16S rRNA, where it helps stabilize the platform of the 30S subunit. The sequence is that of Small ribosomal subunit protein bS18 from Synechococcus elongatus (strain ATCC 33912 / PCC 7942 / FACHB-805) (Anacystis nidulans R2).